The following is a 564-amino-acid chain: MRSDKIKKGVEQAPARSLLHATGQIKSPGDMDKPFIAICNSYIDIVPGHVHLRELADVAKEAIREAGGIPFEFNTIGVDDGIAMGHIGMRYSLPSREVIADAAETVINAHWFDGVFYIPNCDKITPGMLLASVRTNVPAIFCSGGPMKAGLSAHGKALTLSSVFEAVGAFKDGSMSQEDFLDMEANACPTCGSCAGMFTANSMNCLMEILGMAVPGNGTTLAVSDARRDLIRESAFHLMDLVKKDIRPRDIITKDAIDDAFALDMAMGGSTNTVLHTLALANEAGIEDYDLERINDIAKRVPYLSKIAPSSSYSMHDVHEAGGVSAIVKELVDLGGAIHPDRITVTGKTIRENVADAKINNTDVIHPKENPYSPVGGLSMLFGNIAPKGAAIKVGGVDPSVQVFKGEAICFSSHDEAVEAIDNHTVREGHVVVIRYEGPKGGPGMPEMLAPTSSIVGRGLGKDVALITDGRFSGATRGIAVGHISPEAAAGGPIALVHDGDIITIDLPNRTLNVDVPDEVLEERRKELPKFKAKVKTGYLARYTALVTSAHTGGILQIPEDLID.

Asp-80 provides a ligand contact to Mg(2+). Residue Cys-121 coordinates [2Fe-2S] cluster. Positions 122 and 123 each coordinate Mg(2+). Position 123 is an N6-carboxylysine (Lys-123). Cys-194 provides a ligand contact to [2Fe-2S] cluster. Glu-447 lines the Mg(2+) pocket. Catalysis depends on Ser-473, which acts as the Proton acceptor.

This sequence belongs to the IlvD/Edd family. In terms of assembly, homodimer. [2Fe-2S] cluster serves as cofactor. Requires Mg(2+) as cofactor.

The enzyme catalyses (2R)-2,3-dihydroxy-3-methylbutanoate = 3-methyl-2-oxobutanoate + H2O. The catalysed reaction is (2R,3R)-2,3-dihydroxy-3-methylpentanoate = (S)-3-methyl-2-oxopentanoate + H2O. Its pathway is amino-acid biosynthesis; L-isoleucine biosynthesis; L-isoleucine from 2-oxobutanoate: step 3/4. It participates in amino-acid biosynthesis; L-valine biosynthesis; L-valine from pyruvate: step 3/4. In terms of biological role, functions in the biosynthesis of branched-chain amino acids. Catalyzes the dehydration of (2R,3R)-2,3-dihydroxy-3-methylpentanoate (2,3-dihydroxy-3-methylvalerate) into 2-oxo-3-methylpentanoate (2-oxo-3-methylvalerate) and of (2R)-2,3-dihydroxy-3-methylbutanoate (2,3-dihydroxyisovalerate) into 2-oxo-3-methylbutanoate (2-oxoisovalerate), the penultimate precursor to L-isoleucine and L-valine, respectively. The protein is Dihydroxy-acid dehydratase of Listeria monocytogenes serotype 4a (strain HCC23).